The following is a 510-amino-acid chain: Glycerol kinase (510 aa).

ADP is bound at residue Thr13. 2 residues coordinate ATP: Thr13 and Thr14. Thr13 contacts sn-glycerol 3-phosphate. Position 17 (Arg17) interacts with ADP. Sn-glycerol 3-phosphate contacts are provided by Arg83, Glu84, Tyr135, and Asp255. Glycerol contacts are provided by Arg83, Glu84, Tyr135, Asp255, and Gln256. ADP is bound by residues Thr277, Gly321, Gly421, and Asn425. ATP contacts are provided by Thr277, Gly321, and Gly421.

This sequence belongs to the FGGY kinase family.

The catalysed reaction is glycerol + ATP = sn-glycerol 3-phosphate + ADP + H(+). It participates in polyol metabolism; glycerol degradation via glycerol kinase pathway; sn-glycerol 3-phosphate from glycerol: step 1/1. Key enzyme in the regulation of glycerol uptake and metabolism. Catalyzes the phosphorylation of glycerol to yield sn-glycerol 3-phosphate. The protein is Glycerol kinase of Haloquadratum walsbyi (strain DSM 16790 / HBSQ001).